A 317-amino-acid chain; its full sequence is Ribosomal protein L11 methyltransferase (317 aa).

The S-adenosyl-L-methionine site is built by threonine 158, glycine 179, aspartate 201, and asparagine 244.

It belongs to the methyltransferase superfamily. PrmA family.

The protein localises to the cytoplasm. It catalyses the reaction L-lysyl-[protein] + 3 S-adenosyl-L-methionine = N(6),N(6),N(6)-trimethyl-L-lysyl-[protein] + 3 S-adenosyl-L-homocysteine + 3 H(+). Its function is as follows. Methylates ribosomal protein L11. This chain is Ribosomal protein L11 methyltransferase, found in Streptococcus pyogenes serotype M4 (strain MGAS10750).